The primary structure comprises 257 residues: Hydroxyethylthiazole kinase (257 aa).

A substrate-binding site is contributed by Met42. ATP contacts are provided by Arg117 and Thr163. A substrate-binding site is contributed by Ala190.

The protein belongs to the Thz kinase family. It depends on Mg(2+) as a cofactor.

It carries out the reaction 5-(2-hydroxyethyl)-4-methylthiazole + ATP = 4-methyl-5-(2-phosphooxyethyl)-thiazole + ADP + H(+). Its pathway is cofactor biosynthesis; thiamine diphosphate biosynthesis; 4-methyl-5-(2-phosphoethyl)-thiazole from 5-(2-hydroxyethyl)-4-methylthiazole: step 1/1. Functionally, catalyzes the phosphorylation of the hydroxyl group of 4-methyl-5-beta-hydroxyethylthiazole (THZ). In Roseobacter denitrificans (strain ATCC 33942 / OCh 114) (Erythrobacter sp. (strain OCh 114)), this protein is Hydroxyethylthiazole kinase.